A 176-amino-acid polypeptide reads, in one-letter code: ATP synthase subunit b (176 aa).

Residues 24-43 (FAFRVVNFVIFAGIIWKAAG) form a helical membrane-spanning segment.

Belongs to the ATPase B chain family. As to quaternary structure, F-type ATPases have 2 components, F(1) - the catalytic core - and F(0) - the membrane proton channel. F(1) has five subunits: alpha(3), beta(3), gamma(1), delta(1), epsilon(1). F(0) has three main subunits: a(1), b(2) and c(10-14). The alpha and beta chains form an alternating ring which encloses part of the gamma chain. F(1) is attached to F(0) by a central stalk formed by the gamma and epsilon chains, while a peripheral stalk is formed by the delta and b chains.

The protein resides in the cell inner membrane. F(1)F(0) ATP synthase produces ATP from ADP in the presence of a proton or sodium gradient. F-type ATPases consist of two structural domains, F(1) containing the extramembraneous catalytic core and F(0) containing the membrane proton channel, linked together by a central stalk and a peripheral stalk. During catalysis, ATP synthesis in the catalytic domain of F(1) is coupled via a rotary mechanism of the central stalk subunits to proton translocation. In terms of biological role, component of the F(0) channel, it forms part of the peripheral stalk, linking F(1) to F(0). The polypeptide is ATP synthase subunit b (Nitratidesulfovibrio vulgaris (strain ATCC 29579 / DSM 644 / CCUG 34227 / NCIMB 8303 / VKM B-1760 / Hildenborough) (Desulfovibrio vulgaris)).